A 93-amino-acid polypeptide reads, in one-letter code: HssA/B-like protein 23 (93 aa).

Belongs to the hssA/B family.

In Dictyostelium discoideum (Social amoeba), this protein is HssA/B-like protein 23 (hssl23).